Reading from the N-terminus, the 426-residue chain is Zona pellucida sperm-binding protein 3 (426 aa).

Positions 1–22 (MGLSYGIFICFLLLGGMELCCP) are cleaved as a signal peptide. Glutamine 23 carries the pyrrolidone carboxylic acid modification. At 23–385 (QTIWPTETYY…IEGSTSPHTS (363 aa)) the chain is on the extracellular side. A ZP domain is found at 43–305 (DCLESQLVVT…KACSFIKSTK (263 aa)). 2 disulfides stabilise this stretch: cysteine 44/cysteine 138 and cysteine 76/cysteine 97. N-linked (GlcNAc...) asparagine glycosylation is found at asparagine 123 and asparagine 145. O-linked (GalNAc...) threonine glycosylation is found at threonine 154, threonine 160, and threonine 161. Intrachain disulfides connect cysteine 215/cysteine 280 and cysteine 237/cysteine 298. Asparagine 244 carries N-linked (GlcNAc...) asparagine glycosylation. Residues 351–426 (RRHVTEEAEI…PVICPASVSQ (76 aa)) constitute a propeptide, removed in mature form. Residues 386-406 (VMLGLGLATVVSLTLATIVLV) traverse the membrane as a helical segment. Residues 407–426 (LAKRHRTASHPVICPASVSQ) lie on the Cytoplasmic side of the membrane.

Belongs to the ZP domain family. ZPC subfamily. As to quaternary structure, polymers of ZP2 and ZP3 organized into long filaments cross-linked by ZP1 homodimers. Interacts with ZP1 and ZP2. In terms of processing, proteolytically cleaved before the transmembrane segment to yield the secreted ectodomain incorporated in the zona pellucida. N-glycosylated. Post-translationally, O-glycosylated; removal of O-linked glycans may play an important role in the post-fertilization block to polyspermy. In terms of tissue distribution, expressed in oocytes.

The protein localises to the zona pellucida. The protein resides in the cell membrane. Functionally, component of the zona pellucida, an extracellular matrix surrounding oocytes which mediates sperm binding, induction of the acrosome reaction and prevents post-fertilization polyspermy. The zona pellucida is composed of 3 to 4 glycoproteins, ZP1, ZP2, ZP3, and ZP4. ZP3 is essential for sperm binding and zona matrix formation. The chain is Zona pellucida sperm-binding protein 3 (ZP3) from Canis lupus familiaris (Dog).